The primary structure comprises 199 residues: Imidazoleglycerol-phosphate dehydratase (199 aa).

It belongs to the imidazoleglycerol-phosphate dehydratase family.

It localises to the cytoplasm. It carries out the reaction D-erythro-1-(imidazol-4-yl)glycerol 3-phosphate = 3-(imidazol-4-yl)-2-oxopropyl phosphate + H2O. It functions in the pathway amino-acid biosynthesis; L-histidine biosynthesis; L-histidine from 5-phospho-alpha-D-ribose 1-diphosphate: step 6/9. In Mesorhizobium japonicum (strain LMG 29417 / CECT 9101 / MAFF 303099) (Mesorhizobium loti (strain MAFF 303099)), this protein is Imidazoleglycerol-phosphate dehydratase.